The chain runs to 815 residues: Probable disease resistance protein At5g66910 (815 aa).

Residues 1–150 (MVVVDWLGLG…NINKKLDRLS (150 aa)) form the RPW8 domain. 2 consecutive NB-ARC domains span residues 156–283 (PLVS…DVWQ) and 341–440 (SPDE…DIWM). 196 to 203 (GPPGCGKT) contributes to the ATP binding site. LRR repeat units lie at residues 656–678 (NLQEIDIDYCYDLDELPYWIPEV), 680–702 (SLKTLSITNCNKLSQLPEAIGNL), 704–726 (RLEVLRMCSCMNLSELPEATERL), and 728–750 (NLRSLDISHCLGLRKLPQEIGKL).

Belongs to the disease resistance NB-LRR family.

Its function is as follows. Probable disease resistance protein. The polypeptide is Probable disease resistance protein At5g66910 (Arabidopsis thaliana (Mouse-ear cress)).